We begin with the raw amino-acid sequence, 72 residues long: MGVALGAGLAVSIAGIGGGIGMGIAGGKAFEAIARQPEVGGDVRTLLFITLAFIETLTIYGLLIAFMLVGKA.

A run of 2 helical transmembrane segments spans residues 4-24 (ALGA…GMGI) and 46-66 (LLFI…LIAF).

Belongs to the ATPase C chain family. In terms of assembly, F-type ATPases have 2 components, F(1) - the catalytic core - and F(0) - the membrane proton channel. F(1) has five subunits: alpha(3), beta(3), gamma(1), delta(1), epsilon(1). F(0) has three main subunits: a(1), b(2) and c(10-14). The alpha and beta chains form an alternating ring which encloses part of the gamma chain. F(1) is attached to F(0) by a central stalk formed by the gamma and epsilon chains, while a peripheral stalk is formed by the delta and b chains.

The protein resides in the cell membrane. F(1)F(0) ATP synthase produces ATP from ADP in the presence of a proton or sodium gradient. F-type ATPases consist of two structural domains, F(1) containing the extramembraneous catalytic core and F(0) containing the membrane proton channel, linked together by a central stalk and a peripheral stalk. During catalysis, ATP synthesis in the catalytic domain of F(1) is coupled via a rotary mechanism of the central stalk subunits to proton translocation. Its function is as follows. Key component of the F(0) channel; it plays a direct role in translocation across the membrane. A homomeric c-ring of between 10-14 subunits forms the central stalk rotor element with the F(1) delta and epsilon subunits. This Syntrophomonas wolfei subsp. wolfei (strain DSM 2245B / Goettingen) protein is ATP synthase subunit c.